Here is a 307-residue protein sequence, read N- to C-terminus: Glutaminase (307 aa).

Substrate is bound by residues serine 66, asparagine 117, glutamate 161, asparagine 168, tyrosine 192, tyrosine 243, and valine 261.

Belongs to the glutaminase family. As to quaternary structure, homotetramer.

It carries out the reaction L-glutamine + H2O = L-glutamate + NH4(+). This Serratia proteamaculans (strain 568) protein is Glutaminase.